Here is a 153-residue protein sequence, read N- to C-terminus: Glucose-6-phosphate 1-dehydrogenase (153 aa).

NADP(+) contacts are provided by Arg-21 and Lys-120. Lys-120 is a binding site for D-glucose 6-phosphate.

Belongs to the glucose-6-phosphate dehydrogenase family.

The protein localises to the cytoplasm. Its subcellular location is the cytosol. It carries out the reaction D-glucose 6-phosphate + NADP(+) = 6-phospho-D-glucono-1,5-lactone + NADPH + H(+). The protein operates within carbohydrate degradation; pentose phosphate pathway; D-ribulose 5-phosphate from D-glucose 6-phosphate (oxidative stage): step 1/3. Its function is as follows. Cytosolic glucose-6-phosphate dehydrogenase that catalyzes the first and rate-limiting step of the oxidative branch within the pentose phosphate pathway/shunt, an alternative route to glycolysis for the dissimilation of carbohydrates and a major source of reducing power and metabolic intermediates for fatty acid and nucleic acid biosynthetic processes. This is Glucose-6-phosphate 1-dehydrogenase (ZW) from Culex pipiens (House mosquito).